The primary structure comprises 143 residues: Transcriptional regulator MraZ (143 aa).

2 consecutive SpoVT-AbrB domains span residues 5 to 47 (TYTP…PRDE) and 76 to 119 (TDEQ…DAQA).

The protein belongs to the MraZ family. In terms of assembly, forms oligomers.

It localises to the cytoplasm. The protein resides in the nucleoid. This chain is Transcriptional regulator MraZ, found in Mycolicibacterium smegmatis (strain ATCC 700084 / mc(2)155) (Mycobacterium smegmatis).